Here is a 541-residue protein sequence, read N- to C-terminus: Membrane protein insertase YidC (541 aa).

A helical membrane pass occupies residues 6 to 26; the sequence is SLLVLALIFISFLVYQQWQLD. A disordered region spans residues 34 to 56; it reads EQTTSITATSDVPASSPSNSQAI. Transmembrane regions (helical) follow at residues 337–357, 416–436, 454–474, and 495–515; these read FWLL…IICV, LGGC…YWTF, LSAQ…MFLL, and PLVF…YWLV.

This sequence belongs to the OXA1/ALB3/YidC family. Type 1 subfamily. Interacts with the Sec translocase complex via SecD. Specifically interacts with transmembrane segments of nascent integral membrane proteins during membrane integration.

Its subcellular location is the cell inner membrane. Functionally, required for the insertion and/or proper folding and/or complex formation of integral membrane proteins into the membrane. Involved in integration of membrane proteins that insert both dependently and independently of the Sec translocase complex, as well as at least some lipoproteins. Aids folding of multispanning membrane proteins. The polypeptide is Membrane protein insertase YidC (Haemophilus influenzae (strain ATCC 51907 / DSM 11121 / KW20 / Rd)).